Consider the following 466-residue polypeptide: tRNA(Ile)-lysidine synthase (466 aa).

ATP is bound at residue 26–31 (SGGSDS).

Belongs to the tRNA(Ile)-lysidine synthase family.

The protein localises to the cytoplasm. It catalyses the reaction cytidine(34) in tRNA(Ile2) + L-lysine + ATP = lysidine(34) in tRNA(Ile2) + AMP + diphosphate + H(+). Its function is as follows. Ligates lysine onto the cytidine present at position 34 of the AUA codon-specific tRNA(Ile) that contains the anticodon CAU, in an ATP-dependent manner. Cytidine is converted to lysidine, thus changing the amino acid specificity of the tRNA from methionine to isoleucine. In Oceanobacillus iheyensis (strain DSM 14371 / CIP 107618 / JCM 11309 / KCTC 3954 / HTE831), this protein is tRNA(Ile)-lysidine synthase.